We begin with the raw amino-acid sequence, 436 residues long: Hydrolyase ccsE (436 aa).

The active-site Nucleophile is the S249.

It belongs to the AB hydrolase superfamily. FUS2 hydrolase family. Homodimer.

The protein operates within mycotoxin biosynthesis. Hydrolyase; part of the gene cluster that mediates the biosynthesis of a family of the mycotoxins cytochalasins E and K. The hybrid PKS-NRPS synthetase ccsA and the enoyl reductase ccsC are responsible for fusion of phenylalanine with an octaketide backbone and subsequent release of the stable tetramic acid precursor. The polyketide synthase module (PKS) of the PKS-NRPS ccsA is responsible for the synthesis of the octaketide backbone. The downstream nonribosomal peptide synthetase (NRPS) amidates the carboxyl end of the octaketide with a phenylalanine. A reductase-like domain (R) at the C-terminus catalyzes the reductive release of the polyketide-amino acid intermediate. Because ccsA lacks a designated enoylreductase (ER) domain, the required activity is provided the enoyl reductase ccsC. Upon formation of the 11-membered carbocycle-fused perhydroisoindolone intermediate, a number of oxidative steps are required to afford the final cytochalasin E and K, including two hydroxylations at C17 and C18, one alcohol oxidation at C17, one epoxidation at C6 and C7 and two Baeyer-Villiger oxidations. The oxidative modification at C17, C18 and the C6-C7 epoxidation are likely to be catalyzed by the two cytochrome P450 oxygenases ccsD and ccsG. CcsD may be responsible for the epoxidation of the C6-C7 double bond. CcsG may be responsible for the successive oxidative modifications at C17 and C18. The double Baeyer-Villiger oxidations of ketocytochalasin to precytochalasin and cytochalasin Z(16) are among the final steps leading to cytochalasin E and K and are catalyzed by ccsB. The first oxygen insertion step follows that of the classic BVMO mechanism, generating the ester precytochalasin. Release of precytochalasin into an aqueous environment can generate the shunt product iso-precytochalasin through spontaneous isomerization. Alternatively, precytochalasin can undergo further oxidation by ccsB to yield the in-line carbonate-containing cytochalasin Z(16). Cytochalasin Z(16) is a precursor to cytochalasin E and cytochalasin K, whereas iso-precytochalasin is a precursor to cytochalasin Z(17) and rosellichalasin. The hydrolyase ccsE may catalyze hydrolysis of epoxide bond in cytochalasin E to afford cytochalasin K. The function of ccsF has not been assigned but it may play a role in post-PKS-NRPS biosynthetic step, resistance or transport of cytochalasins and related PKS-NRPS products. The chain is Hydrolyase ccsE from Aspergillus clavatus (strain ATCC 1007 / CBS 513.65 / DSM 816 / NCTC 3887 / NRRL 1 / QM 1276 / 107).